Consider the following 447-residue polypeptide: Hydroxymethylglutaryl-CoA synthase (447 aa).

Glu86 serves as the catalytic Proton donor/acceptor. Cys118 serves as the catalytic Acyl-thioester intermediate. Residues Cys118, Asn156, Thr160, Ser210, His250, Lys259, Asn327, and Ser361 each coordinate (3S)-3-hydroxy-3-methylglutaryl-CoA. Residue His250 is the Proton donor/acceptor of the active site. Thr398 carries the phosphothreonine modification.

Belongs to the thiolase-like superfamily. HMG-CoA synthase family.

The enzyme catalyses acetoacetyl-CoA + acetyl-CoA + H2O = (3S)-3-hydroxy-3-methylglutaryl-CoA + CoA + H(+). Its pathway is metabolic intermediate biosynthesis; (R)-mevalonate biosynthesis; (R)-mevalonate from acetyl-CoA: step 2/3. Its function is as follows. Hydroxymethylglutaryl-CoA synthase; part of the first module of ergosterol biosynthesis pathway that includes the early steps of the pathway, conserved across all eukaryotes, and which results in the formation of mevalonate from acetyl-coenzyme A (acetyl-CoA). Hcs1 condenses acetyl-CoA with acetoacetyl-CoA to form hydroxymethylglutaryl-CoA (HMG-CoA). The first module starts with the action of the cytosolic acetyl-CoA acetyltransferase eg10 that catalyzes the formation of acetoacetyl-CoA. The hydroxymethylglutaryl-CoA synthases erg13 then condenses acetyl-CoA with acetoacetyl-CoA to form HMG-CoA. The rate-limiting step of the early module is the reduction to mevalonate by the 3-hydroxy-3-methylglutaryl-coenzyme A (HMG-CoA) reductases hcs1. The sequence is that of Hydroxymethylglutaryl-CoA synthase from Schizosaccharomyces pombe (strain 972 / ATCC 24843) (Fission yeast).